Consider the following 141-residue polypeptide: Hemoglobin subunit alpha (141 aa).

In terms of domain architecture, Globin spans 1–141; the sequence is VLSAADKAHV…VSTVLTSKYR (141 aa). At serine 3 the chain carries Phosphoserine. N6-succinyllysine occurs at positions 7 and 11. Lysine 16 carries the post-translational modification N6-acetyllysine; alternate. The residue at position 16 (lysine 16) is an N6-succinyllysine; alternate. Tyrosine 24 is modified (phosphotyrosine). Phosphoserine is present on serine 35. Lysine 40 carries the N6-succinyllysine modification. Serine 49 bears the Phosphoserine mark. Histidine 58 is a binding site for O2. A heme b-binding site is contributed by histidine 87. Threonine 108 is modified (phosphothreonine). Phosphoserine is present on serine 124. Phosphothreonine is present on residues threonine 134 and threonine 137. Residue serine 138 is modified to Phosphoserine.

It belongs to the globin family. As to quaternary structure, heterotetramer of two alpha chains and two beta chains. In terms of tissue distribution, red blood cells.

In terms of biological role, involved in oxygen transport from the lung to the various peripheral tissues. Hemopressin acts as an antagonist peptide of the cannabinoid receptor CNR1. Hemopressin-binding efficiently blocks cannabinoid receptor CNR1 and subsequent signaling. The sequence is that of Hemoglobin subunit alpha (HBA) from Bradypus tridactylus (Pale-throated three-toed sloth).